The following is a 263-amino-acid chain: Ribosomal RNA small subunit methyltransferase A (263 aa).

Positions 18, 43, 65, 91, and 110 each coordinate S-adenosyl-L-methionine.

This sequence belongs to the class I-like SAM-binding methyltransferase superfamily. rRNA adenine N(6)-methyltransferase family. RsmA subfamily.

The protein localises to the cytoplasm. The enzyme catalyses adenosine(1518)/adenosine(1519) in 16S rRNA + 4 S-adenosyl-L-methionine = N(6)-dimethyladenosine(1518)/N(6)-dimethyladenosine(1519) in 16S rRNA + 4 S-adenosyl-L-homocysteine + 4 H(+). Functionally, specifically dimethylates two adjacent adenosines (A1518 and A1519) in the loop of a conserved hairpin near the 3'-end of 16S rRNA in the 30S particle. May play a critical role in biogenesis of 30S subunits. The chain is Ribosomal RNA small subunit methyltransferase A from Ehrlichia chaffeensis (strain ATCC CRL-10679 / Arkansas).